Consider the following 1457-residue polypeptide: ABC transporter G family member 36 (1457 aa).

Residues 14–43 (RLGGSMRGDSGSMWRRGDDVFSRSSREEDD) form a disordered region. A compositionally biased stretch (basic and acidic residues) spans 28 to 39 (RRGDDVFSRSSR). One can recognise an ABC transporter 1 domain in the interval 164–437 (GNALGILPNR…FESMGFKCPD (274 aa)). 197–204 (GPPGSGKT) provides a ligand contact to ATP. In terms of domain architecture, ABC transmembrane type-2 1 spans 515-728 (ELLKANIDRE…AQNAISVNEL (214 aa)). The next 7 membrane-spanning stretches (helical) occupy residues 533-553 (FVYM…MTLF), 565-585 (SGGI…FNGF), 621-641 (IPIT…VIGF), 653-673 (LLML…GGAA), 677-697 (IVAN…GGFI), 706-726 (WWIW…ISVN), and 765-785 (IGFG…TLAL). Residues 821–841 (SSGSTRRPMGNGTENDSTIVD) form a disordered region. One can recognise an ABC transporter 2 domain in the interval 860–1112 (LSFDNVRYSV…ELIKYFESIP (253 aa)). 905 to 912 (GVSGAGKT) is an ATP binding site. One can recognise an ABC transmembrane type-2 2 domain in the interval 1185-1399 (TQCMACLWKQ…TLYGLVVSQF (215 aa)). The next 7 helical transmembrane spans lie at 1209–1229 (FFFT…LGGK), 1244–1264 (YAAV…VVAV), 1292–1312 (IPYT…MIGF), 1319–1339 (FFWY…YGMM), 1349–1369 (IASI…GFVI), 1380–1400 (WYCW…SQFG), and 1429–1449 (WVAT…GFAI).

The protein belongs to the ABC transporter superfamily. ABCG family. PDR (TC 3.A.1.205) subfamily.

It localises to the membrane. May be a general defense protein. This Oryza sativa subsp. japonica (Rice) protein is ABC transporter G family member 36.